Reading from the N-terminus, the 173-residue chain is Propanediol dehydratase small subunit (173 aa).

It belongs to the diol/glycerol dehydratase small subunit family. The propanediol dehydratase enzyme is a heterotrimeric complex composed of a large (PduC), a medium (PduD) and a small (PduE) subunit. The cofactor is adenosylcob(III)alamin.

It localises to the bacterial microcompartment. The catalysed reaction is propane-1,2-diol = propanal + H2O. It participates in polyol metabolism; 1,2-propanediol degradation. Its activity is regulated as follows. Inhibited by glycerol. Its function is as follows. Part of the PduCDE complex that catalyzes the dehydration of 1,2-propanediol (1,2-PD) to propionaldehyde. Required for S.typhimurium growth on 1,2-PD as the sole carbon and energy source. Localized in the bacterial microcompartment (BMC) dedicated to 1,2-PD degradation. The 1,2-PD-specific bacterial microcompartment (BMC) concentrates low levels of 1,2-PD catabolic enzymes, concentrates volatile reaction intermediates thus enhancing pathway flux and keeps the level of toxic, mutagenic propionaldehyde low. This Salmonella typhimurium (strain LT2 / SGSC1412 / ATCC 700720) protein is Propanediol dehydratase small subunit.